The chain runs to 677 residues: UvrABC system protein B (677 aa).

In terms of domain architecture, Helicase ATP-binding spans glutamate 24–arginine 412. Glycine 37–threonine 44 is a binding site for ATP. The Beta-hairpin motif lies at tyrosine 90–isoleucine 113. Positions glutamine 429–arginine 591 constitute a Helicase C-terminal domain. The UVR domain maps to glutamate 635 to leucine 670.

The protein belongs to the UvrB family. As to quaternary structure, forms a heterotetramer with UvrA during the search for lesions. Interacts with UvrC in an incision complex.

It is found in the cytoplasm. Functionally, the UvrABC repair system catalyzes the recognition and processing of DNA lesions. A damage recognition complex composed of 2 UvrA and 2 UvrB subunits scans DNA for abnormalities. Upon binding of the UvrA(2)B(2) complex to a putative damaged site, the DNA wraps around one UvrB monomer. DNA wrap is dependent on ATP binding by UvrB and probably causes local melting of the DNA helix, facilitating insertion of UvrB beta-hairpin between the DNA strands. Then UvrB probes one DNA strand for the presence of a lesion. If a lesion is found the UvrA subunits dissociate and the UvrB-DNA preincision complex is formed. This complex is subsequently bound by UvrC and the second UvrB is released. If no lesion is found, the DNA wraps around the other UvrB subunit that will check the other stand for damage. The chain is UvrABC system protein B from Bacteroides fragilis (strain YCH46).